The following is a 272-amino-acid chain: Acyl-[acyl-carrier-protein]--UDP-N-acetylglucosamine O-acyltransferase (272 aa).

This sequence belongs to the transferase hexapeptide repeat family. LpxA subfamily. As to quaternary structure, homotrimer.

It localises to the cytoplasm. It carries out the reaction a (3R)-hydroxyacyl-[ACP] + UDP-N-acetyl-alpha-D-glucosamine = a UDP-3-O-[(3R)-3-hydroxyacyl]-N-acetyl-alpha-D-glucosamine + holo-[ACP]. The protein operates within glycolipid biosynthesis; lipid IV(A) biosynthesis; lipid IV(A) from (3R)-3-hydroxytetradecanoyl-[acyl-carrier-protein] and UDP-N-acetyl-alpha-D-glucosamine: step 1/6. In terms of biological role, involved in the biosynthesis of lipid A, a phosphorylated glycolipid that anchors the lipopolysaccharide to the outer membrane of the cell. The chain is Acyl-[acyl-carrier-protein]--UDP-N-acetylglucosamine O-acyltransferase from Methylobacterium radiotolerans (strain ATCC 27329 / DSM 1819 / JCM 2831 / NBRC 15690 / NCIMB 10815 / 0-1).